We begin with the raw amino-acid sequence, 445 residues long: Trigger factor (445 aa).

Positions 171–256 (NDIVIIDFKG…VHVVNEVETP (86 aa)) constitute a PPIase FKBP-type domain.

Belongs to the FKBP-type PPIase family. Tig subfamily.

It is found in the cytoplasm. The catalysed reaction is [protein]-peptidylproline (omega=180) = [protein]-peptidylproline (omega=0). Functionally, involved in protein export. Acts as a chaperone by maintaining the newly synthesized protein in an open conformation. Functions as a peptidyl-prolyl cis-trans isomerase. The polypeptide is Trigger factor (Malacoplasma penetrans (strain HF-2) (Mycoplasma penetrans)).